Consider the following 157-residue polypeptide: MPRRREVPKREILPDPKFGNVELSKFMNVIMEGGKKAVAERIIYGALDLISQKQPEKDALEVFVTAINNVKPMVEVKSRRVGGANYQVPVEVRPVRRLALSMRWIKEAARKRGEKSMAQRLANELMEATEGRGGAMKRRDEVHRMAEANKAFSHFRF.

It belongs to the universal ribosomal protein uS7 family. Part of the 30S ribosomal subunit. Contacts proteins S9 and S11.

In terms of biological role, one of the primary rRNA binding proteins, it binds directly to 16S rRNA where it nucleates assembly of the head domain of the 30S subunit. Is located at the subunit interface close to the decoding center, probably blocks exit of the E-site tRNA. The protein is Small ribosomal subunit protein uS7 of Acidovorax ebreus (strain TPSY) (Diaphorobacter sp. (strain TPSY)).